The chain runs to 136 residues: Ribosome-binding factor A (136 aa).

Residues 114–136 (DRANRPGPAADEPDEPDEPEDRR) are disordered. A compositionally biased stretch (acidic residues) spans 124–136 (DEPDEPDEPEDRR).

This sequence belongs to the RbfA family. Monomer. Binds 30S ribosomal subunits, but not 50S ribosomal subunits or 70S ribosomes.

It is found in the cytoplasm. Its function is as follows. One of several proteins that assist in the late maturation steps of the functional core of the 30S ribosomal subunit. Associates with free 30S ribosomal subunits (but not with 30S subunits that are part of 70S ribosomes or polysomes). Required for efficient processing of 16S rRNA. May interact with the 5'-terminal helix region of 16S rRNA. The protein is Ribosome-binding factor A of Bordetella petrii (strain ATCC BAA-461 / DSM 12804 / CCUG 43448).